Reading from the N-terminus, the 389-residue chain is Naringenin-chalcone synthase (389 aa).

Cys-164 is an active-site residue.

It belongs to the thiolase-like superfamily. Chalcone/stilbene synthases family. Expressed in glandular trichomes. Detected at low levels in female flowers, stems, seeds, leaves and roots.

It is found in the cytoplasm. It carries out the reaction (E)-4-coumaroyl-CoA + 3 malonyl-CoA + 3 H(+) = 2',4,4',6'-tetrahydroxychalcone + 3 CO2 + 4 CoA. Functionally, chalcone synthase that can also use isovaleryl-CoA, isobutyryl-CoA or hexanoyl-CoA as substrates, but that is unable to produce olivetol or olivetolic acid. The polypeptide is Naringenin-chalcone synthase (CHS) (Cannabis sativa (Hemp)).